We begin with the raw amino-acid sequence, 387 residues long: 3-ketoacyl-CoA thiolase (387 aa).

C91 acts as the Acyl-thioester intermediate in catalysis. Residues H343 and C373 each act as proton acceptor in the active site.

It belongs to the thiolase-like superfamily. Thiolase family. In terms of assembly, heterotetramer of two alpha chains (FadB) and two beta chains (FadA).

Its subcellular location is the cytoplasm. The enzyme catalyses an acyl-CoA + acetyl-CoA = a 3-oxoacyl-CoA + CoA. It functions in the pathway lipid metabolism; fatty acid beta-oxidation. In terms of biological role, catalyzes the final step of fatty acid oxidation in which acetyl-CoA is released and the CoA ester of a fatty acid two carbons shorter is formed. The polypeptide is 3-ketoacyl-CoA thiolase (Pectobacterium carotovorum subsp. carotovorum (strain PC1)).